We begin with the raw amino-acid sequence, 148 residues long: RING finger protein 24 (148 aa).

The chain crosses the membrane as a helical span at residues 24 to 44 (IYIVVFGTAIFVFILSLLFCC). The RING-type zinc-finger motif lies at 78-119 (CAVCLEDFKPRDELGICPCKHAFHRKCLIKWLEVRKVCPLCN).

Interacts with TRPC1, TRPC3, TRPC4, TRPC5, TRPC6 and TRPC7.

The protein resides in the golgi apparatus membrane. Its function is as follows. May play a role in TRPCs intracellular trafficking. The protein is RING finger protein 24 (RNF24) of Homo sapiens (Human).